The following is a 597-amino-acid chain: Elongation factor 4 (597 aa).

Residues 2 to 184 form the tr-type G domain; that stretch reads KNIRNFSIIA…EIVAKIPAPT (183 aa). Residues 14–19 and 131–134 each bind GTP; these read DHGKST and NKID.

Belongs to the TRAFAC class translation factor GTPase superfamily. Classic translation factor GTPase family. LepA subfamily.

It localises to the cell inner membrane. The enzyme catalyses GTP + H2O = GDP + phosphate + H(+). In terms of biological role, required for accurate and efficient protein synthesis under certain stress conditions. May act as a fidelity factor of the translation reaction, by catalyzing a one-codon backward translocation of tRNAs on improperly translocated ribosomes. Back-translocation proceeds from a post-translocation (POST) complex to a pre-translocation (PRE) complex, thus giving elongation factor G a second chance to translocate the tRNAs correctly. Binds to ribosomes in a GTP-dependent manner. The sequence is that of Elongation factor 4 from Neisseria meningitidis serogroup C / serotype 2a (strain ATCC 700532 / DSM 15464 / FAM18).